The chain runs to 520 residues: GMP synthase [glutamine-hydrolyzing] (520 aa).

The 194-residue stretch at 9 to 202 (TVLIVDFGSQ…IHNIAGIKGD (194 aa)) folds into the Glutamine amidotransferase type-1 domain. The active-site Nucleophile is the Cys86. Residues His176 and Glu178 contribute to the active site. Residues 203–395 (WSMSAYRAKA…LGLPDSFIGR (193 aa)) enclose the GMPS ATP-PPase domain. Residue 230-236 (SGGVDSS) coordinates ATP.

As to quaternary structure, homodimer.

The enzyme catalyses XMP + L-glutamine + ATP + H2O = GMP + L-glutamate + AMP + diphosphate + 2 H(+). It participates in purine metabolism; GMP biosynthesis; GMP from XMP (L-Gln route): step 1/1. Catalyzes the synthesis of GMP from XMP. The polypeptide is GMP synthase [glutamine-hydrolyzing] (Rhizobium rhizogenes (strain K84 / ATCC BAA-868) (Agrobacterium radiobacter)).